The following is a 455-amino-acid chain: Bifunctional protein GlmU (455 aa).

Residues 1–227 are pyrophosphorylase; that stretch reads MLTDIVILAA…ATEALGVNDP (227 aa). UDP-N-acetyl-alpha-D-glucosamine is bound by residues 8–11, Lys22, Gln73, 78–79, 100–102, Gly137, Glu152, Asn167, and Asn225; these read LAAG, GT, and YGD. Asp102 serves as a coordination point for Mg(2+). Asn225 serves as a coordination point for Mg(2+). The tract at residues 228 to 248 is linker; sequence VQLAILERVFQRQQLRALQMQ. Positions 249–455 are N-acetyltransferase; it reads GLRVADPARV…HWQRPRRDKK (207 aa). Arg331 and Lys349 together coordinate UDP-N-acetyl-alpha-D-glucosamine. The Proton acceptor role is filled by His361. UDP-N-acetyl-alpha-D-glucosamine-binding residues include Tyr364 and Asn375. Acetyl-CoA is bound by residues Ala378, 384–385, Ser403, Ala421, and Arg438; that span reads NY. Residues 420 to 455 form a disordered region; the sequence is GAGSTITKEVPPGGLTLSRSPQRTIPHWQRPRRDKK.

The protein in the N-terminal section; belongs to the N-acetylglucosamine-1-phosphate uridyltransferase family. It in the C-terminal section; belongs to the transferase hexapeptide repeat family. As to quaternary structure, homotrimer. Mg(2+) is required as a cofactor.

The protein resides in the cytoplasm. It carries out the reaction alpha-D-glucosamine 1-phosphate + acetyl-CoA = N-acetyl-alpha-D-glucosamine 1-phosphate + CoA + H(+). The catalysed reaction is N-acetyl-alpha-D-glucosamine 1-phosphate + UTP + H(+) = UDP-N-acetyl-alpha-D-glucosamine + diphosphate. The protein operates within nucleotide-sugar biosynthesis; UDP-N-acetyl-alpha-D-glucosamine biosynthesis; N-acetyl-alpha-D-glucosamine 1-phosphate from alpha-D-glucosamine 6-phosphate (route II): step 2/2. It functions in the pathway nucleotide-sugar biosynthesis; UDP-N-acetyl-alpha-D-glucosamine biosynthesis; UDP-N-acetyl-alpha-D-glucosamine from N-acetyl-alpha-D-glucosamine 1-phosphate: step 1/1. It participates in bacterial outer membrane biogenesis; LPS lipid A biosynthesis. In terms of biological role, catalyzes the last two sequential reactions in the de novo biosynthetic pathway for UDP-N-acetylglucosamine (UDP-GlcNAc). The C-terminal domain catalyzes the transfer of acetyl group from acetyl coenzyme A to glucosamine-1-phosphate (GlcN-1-P) to produce N-acetylglucosamine-1-phosphate (GlcNAc-1-P), which is converted into UDP-GlcNAc by the transfer of uridine 5-monophosphate (from uridine 5-triphosphate), a reaction catalyzed by the N-terminal domain. The protein is Bifunctional protein GlmU of Acidithiobacillus ferrooxidans (strain ATCC 23270 / DSM 14882 / CIP 104768 / NCIMB 8455) (Ferrobacillus ferrooxidans (strain ATCC 23270)).